The chain runs to 437 residues: Enolase (437 aa).

Gln162 serves as a coordination point for (2R)-2-phosphoglycerate. Catalysis depends on Glu204, which acts as the Proton donor. Mg(2+) is bound by residues Asp251, Glu297, and Asp324. 4 residues coordinate (2R)-2-phosphoglycerate: Lys349, Arg378, Ser379, and Lys400. Lys349 serves as the catalytic Proton acceptor.

This sequence belongs to the enolase family. Requires Mg(2+) as cofactor.

It localises to the cytoplasm. The protein localises to the secreted. The protein resides in the cell surface. The catalysed reaction is (2R)-2-phosphoglycerate = phosphoenolpyruvate + H2O. Its pathway is carbohydrate degradation; glycolysis; pyruvate from D-glyceraldehyde 3-phosphate: step 4/5. Its function is as follows. Catalyzes the reversible conversion of 2-phosphoglycerate (2-PG) into phosphoenolpyruvate (PEP). It is essential for the degradation of carbohydrates via glycolysis. In Chlorobium chlorochromatii (strain CaD3), this protein is Enolase.